We begin with the raw amino-acid sequence, 178 residues long: Large ribosomal subunit protein uL6 (178 aa).

This sequence belongs to the universal ribosomal protein uL6 family. In terms of assembly, part of the 50S ribosomal subunit.

Functionally, this protein binds to the 23S rRNA, and is important in its secondary structure. It is located near the subunit interface in the base of the L7/L12 stalk, and near the tRNA binding site of the peptidyltransferase center. The polypeptide is Large ribosomal subunit protein uL6 (Streptococcus pneumoniae serotype 4 (strain ATCC BAA-334 / TIGR4)).